We begin with the raw amino-acid sequence, 217 residues long: Probable GTP-binding protein EngB (217 aa).

An EngB-type G domain is found at 33-217 (GPTEIAFAGR…RAAIELAVAR (185 aa)). GTP contacts are provided by residues 41 to 48 (GRSNVGKS), 68 to 72 (GRTQE), 95 to 98 (DMPG), 162 to 165 (TKTD), and 196 to 198 (TSS). Residues S48 and T70 each contribute to the Mg(2+) site.

This sequence belongs to the TRAFAC class TrmE-Era-EngA-EngB-Septin-like GTPase superfamily. EngB GTPase family. Mg(2+) serves as cofactor.

Functionally, necessary for normal cell division and for the maintenance of normal septation. The sequence is that of Probable GTP-binding protein EngB from Sinorhizobium medicae (strain WSM419) (Ensifer medicae).